Consider the following 314-residue polypeptide: MAQKDTLLHLFAGGCGGTVGAIMTCPLEVLKTRLQSSGLTLRPVFQVQLGTLNGAGVIRPGSVTPGLLQVLRSILEKEGPRSLFRGLGPNLVGVAPSRAIYFAAYSKSKETFNGIFVPNSGVVHMSSAGFAAFITNSLMNPIWMVKTRMQLEKKARGEKKMNALQCARYVYKTEGMRGFYRGLTASYAGISETMICFLIYETLKKYLAQSRFTTPDTDNDKGASDFLGLMFAAAFAKGCASCIAYPHEVIRTRLREEGSKYKYFFQTARLVAVEEGYAAFYRGLIPQLIRQIPNTAIVLSTYELIVHLLAEPSK.

Solcar repeat units lie at residues 4-111 (KDTL…SKET), 119-206 (NSGV…LKKY), and 224-308 (SDFL…IVHL). 6 consecutive transmembrane segments (helical) span residues 7–27 (LLHL…TCPL), 44–58 (VFQV…AGVI), 114–134 (GIFV…AAFI), 183–203 (LTAS…YETL), 226–246 (FLGL…IAYP), and 291–311 (QIPN…LLAE).

Belongs to the mitochondrial carrier (TC 2.A.29) family.

Its subcellular location is the mitochondrion inner membrane. In terms of biological role, mitochondrial transporter that imports/exports pyrimidine nucleotides into and from mitochondria which participates in dendritic cell endocytosis. The protein is Solute carrier family 25 member 33 (slc25a33) of Danio rerio (Zebrafish).